The sequence spans 302 residues: Putative F-box protein At1g32420 (302 aa).

The span at 1–10 (MKRGNEENNH) shows a compositional bias: basic and acidic residues. The segment at 1–27 (MKRGNEENNHKTSSSSSTQRLSRRKIS) is disordered. Residues 31–78 (KSGNVNIPLDLTVEILKKLPAKSLLRFQCVSKQWLSIISSRRDFIDSI) form the F-box domain.

The sequence is that of Putative F-box protein At1g32420 from Arabidopsis thaliana (Mouse-ear cress).